The chain runs to 557 residues: MNEDETSILNKKMEKIEVEMAEFERLGAEREKEAVERIVQEENQNPEVPSNDDASTDIKSRKEGNMKVTAEEIGLETENFDELPVSNGFGVSRRETHYGNNRTYYKNSQGYRRKPKRDDYNNNRKNFYPPIQNSTYFINATGGIDSMPYFGLNNAPGNIYPFSMYKPLEADPQYLSVPSSMPSRREAGMAYGYQNYKRGGYTPNTQYFEEPLNNTSFPNSQGKEGKNSGYRKSSRILDIRVKFGNSSMKAINFQPKKKIVHVVHNPRLHQNKVLRVSIPGSQPALVTPKHKMNVPPMGMYPLPFSPLPSAAPPIPFSPNVSSHPHMAFLPATVPTHSAPPGFVPYDFPITNDKMYPSPSFQEEFPSTSKSPSATPGSSNAPVVDMHPSADSATYPTSIYPSNVRARDDSQQAYISANMTTGEMPSMTNVPAGNAPAAPGTMYTTPLPTANSPIAYQSYSVMPTYWSFPQNYDSTVPAVYPYMPPPFSGSDMNVMSNPAADTLRSYSPASQVSTPPFGFVYYYDPNQYYVPVSNESANATSQPLSNLDTGGSAPYDHI.

Residues 2–45 (NEDETSILNKKMEKIEVEMAEFERLGAEREKEAVERIVQEENQN) adopt a coiled-coil conformation. Disordered regions lie at residues 39-62 (VQEE…KSRK), 101-127 (NRTY…RKNF), 356-402 (PSPS…YPSN), and 536-557 (ANAT…YDHI). 4 stretches are compositionally biased toward polar residues: residues 101-110 (NRTYYKNSQG), 358-380 (PSFQ…SSNA), 390-400 (DSATYPTSIYP), and 536-548 (ANAT…NLDT).

It is found in the cytoplasm. It localises to the nucleus. This is an uncharacterized protein from Schizosaccharomyces pombe (strain 972 / ATCC 24843) (Fission yeast).